Here is a 450-residue protein sequence, read N- to C-terminus: Glucose-6-phosphate isomerase (450 aa).

Thr39 carries the post-translational modification Phosphothreonine. Glu291 functions as the Proton donor in the catalytic mechanism. Catalysis depends on residues His312 and Lys426.

It belongs to the GPI family.

It localises to the cytoplasm. The enzyme catalyses alpha-D-glucose 6-phosphate = beta-D-fructose 6-phosphate. It participates in carbohydrate biosynthesis; gluconeogenesis. The protein operates within carbohydrate degradation; glycolysis; D-glyceraldehyde 3-phosphate and glycerone phosphate from D-glucose: step 2/4. Functionally, catalyzes the reversible isomerization of glucose-6-phosphate to fructose-6-phosphate. This is Glucose-6-phosphate isomerase from Bacillus cereus (strain AH187).